The following is a 69-amino-acid chain: VLIIAVLFLTACQLTTAETSSRGKQKHRALRSTDKNSRMSKRCTPPGGYCYHPDPCCSQVCNFPRKHCL.

A signal peptide spans 1-17 (VLIIAVLFLTACQLTTA). Positions 18–40 (ETSSRGKQKHRALRSTDKNSRMS) are excised as a propeptide. Positions 20 to 41 (SSRGKQKHRALRSTDKNSRMSK) are disordered. Intrachain disulfides connect C43/C57, C50/C61, and C56/C68.

The protein belongs to the conotoxin O1 superfamily. In terms of tissue distribution, expressed by the venom duct.

The protein localises to the secreted. This is Conotoxin AbVIF from Conus abbreviatus (Abbreviated cone).